The primary structure comprises 326 residues: Nicotianamine synthase 2 (326 aa).

Belongs to the nicotianamine synthase (NAS)-like family. In terms of tissue distribution, expressed in roots.

It catalyses the reaction 3 S-adenosyl-L-methionine = nicotianamine + 3 S-methyl-5'-thioadenosine + 3 H(+). In terms of biological role, synthesizes nicotianamine, a polyamine that is the first intermediate in the synthesis of the phytosiderophores of the mugineic acid type found in gramineae which serve as a sensor for the physiological iron status within the plant, and/or might be involved in the transport of iron. This chain is Nicotianamine synthase 2 (NAS2), found in Oryza sativa subsp. japonica (Rice).